We begin with the raw amino-acid sequence, 451 residues long: Glucose-6-phosphate isomerase (451 aa).

T38 is subject to Phosphothreonine. Catalysis depends on E290, which acts as the Proton donor. Residues H311 and K425 contribute to the active site.

The protein belongs to the GPI family.

The protein resides in the cytoplasm. The catalysed reaction is alpha-D-glucose 6-phosphate = beta-D-fructose 6-phosphate. The protein operates within carbohydrate biosynthesis; gluconeogenesis. It functions in the pathway carbohydrate degradation; glycolysis; D-glyceraldehyde 3-phosphate and glycerone phosphate from D-glucose: step 2/4. Functionally, catalyzes the reversible isomerization of glucose-6-phosphate to fructose-6-phosphate. This is Glucose-6-phosphate isomerase from Shouchella clausii (strain KSM-K16) (Alkalihalobacillus clausii).